The chain runs to 152 residues: Histone H2B.9 (152 aa).

2 stretches are compositionally biased toward basic and acidic residues: residues 1–16 and 34–52; these read MAPK…KPAE and EKRL…EGKK. The tract at residues 1-59 is disordered; sequence MAPKAEKKPAAKKPAEEEPAAEKAPAAGKKPKAEKRLPAGKGEKGGAGEGKKAGRKKGK. Lys7 and Lys35 each carry N6-acetyllysine. Lys148 participates in a covalent cross-link: Glycyl lysine isopeptide (Lys-Gly) (interchain with G-Cter in ubiquitin).

The protein belongs to the histone H2B family. The nucleosome is a histone octamer containing two molecules each of H2A, H2B, H3 and H4 assembled in one H3-H4 heterotetramer and two H2A-H2B heterodimers. The octamer wraps approximately 147 bp of DNA. In terms of processing, can be acetylated to form H2BK6ac and H2BK33ac. Monoubiquitinated by BRE1 to form H2BK143ub1 and deubiquitinated by UBP26. Required for heterochromatic histone H3 di- and trimethylation at H3K4me. May give a specific tag for epigenetic transcriptional activation.

It is found in the nucleus. The protein localises to the chromosome. Its function is as follows. Core component of nucleosome. Nucleosomes wrap and compact DNA into chromatin, limiting DNA accessibility to the cellular machineries which require DNA as a template. Histones thereby play a central role in transcription regulation, DNA repair, DNA replication and chromosomal stability. DNA accessibility is regulated via a complex set of post-translational modifications of histones, also called histone code, and nucleosome remodeling. In Oryza sativa subsp. indica (Rice), this protein is Histone H2B.9 (H2B.9).